A 508-amino-acid polypeptide reads, in one-letter code: Hydroxymethylglutaryl-CoA synthase, mitochondrial (508 aa).

Residues Met-1–Ser-37 constitute a mitochondrion transit peptide. The residue at position 52 (Lys-52) is an N6-succinyllysine. (3S)-3-hydroxy-3-methylglutaryl-CoA contacts are provided by Glu-80 and Ala-81. N6-acetyllysine; alternate occurs at positions 83 and 118. N6-succinyllysine; alternate occurs at positions 83 and 118. Residue Glu-132 is the Proton donor/acceptor of the active site. Cys-166, Asn-204, and Thr-208 together coordinate (3S)-3-hydroxy-3-methylglutaryl-CoA. The active-site Acyl-thioester intermediate is the Cys-166. Lys-221 carries the post-translational modification N6-succinyllysine. Lys-243 bears the N6-acetyllysine mark. Lys-256 carries the N6-acetyllysine; alternate modification. At Lys-256 the chain carries N6-succinyllysine; alternate. 2 residues coordinate (3S)-3-hydroxy-3-methylglutaryl-CoA: Ser-258 and His-301. His-301 (proton donor/acceptor) is an active-site residue. Lys-306 carries the post-translational modification N6-acetyllysine. Lys-310 contributes to the (3S)-3-hydroxy-3-methylglutaryl-CoA binding site. N6-acetyllysine; alternate occurs at positions 310 and 327. N6-succinyllysine; alternate occurs at positions 310 and 327. Position 333 is an N6-succinyllysine (Lys-333). N6-acetyllysine; alternate is present on residues Lys-342, Lys-350, Lys-354, and Lys-358. N6-succinyllysine; alternate is present on residues Lys-342, Lys-350, Lys-354, and Lys-358. (3S)-3-hydroxy-3-methylglutaryl-CoA-binding residues include Asn-380 and Ser-414. Lys-427 carries the post-translational modification N6-acetyllysine. At Ser-433 the chain carries Phosphoserine. Lys-437 bears the N6-acetyllysine mark. Ser-440 is modified (phosphoserine). An N6-acetyllysine; alternate modification is found at Lys-447. The residue at position 447 (Lys-447) is an N6-succinyllysine; alternate. Residue Ser-456 is modified to Phosphoserine. N6-acetyllysine; alternate is present on Lys-473. The residue at position 473 (Lys-473) is an N6-succinyllysine; alternate. Ser-477 bears the Phosphoserine mark.

The protein belongs to the thiolase-like superfamily. HMG-CoA synthase family. In terms of assembly, homodimer. In terms of processing, acetylation of Lys-427 is observed in liver mitochondria from fasted mice but not from fed mice. Succinylated. Desuccinylated by SIRT5. Succinylation, at least at Lys-83 and Lys-310, inhibits the enzymatic activity. In terms of tissue distribution, liver and kidney.

The protein localises to the mitochondrion. The enzyme catalyses acetoacetyl-CoA + acetyl-CoA + H2O = (3S)-3-hydroxy-3-methylglutaryl-CoA + CoA + H(+). It participates in metabolic intermediate biosynthesis; (R)-mevalonate biosynthesis; (R)-mevalonate from acetyl-CoA: step 2/3. In terms of biological role, catalyzes the first irreversible step in ketogenesis, condensing acetyl-CoA to acetoacetyl-CoA to form HMG-CoA, which is converted by HMG-CoA reductase (HMGCR) into mevalonate. The polypeptide is Hydroxymethylglutaryl-CoA synthase, mitochondrial (Hmgcs2) (Mus musculus (Mouse)).